We begin with the raw amino-acid sequence, 374 residues long: Transcription factor IIIA (374 aa).

7 consecutive C2H2-type zinc fingers follow at residues 23-47 (FHCP…LRTH), 53-77 (FVCD…KRCH), 83-107 (FSCH…IEVH), 113-138 (YACT…SACH), 144-169 (YPCT…NRAH), 204-226 (PSCS…VVLH), and 236-261 (YHCP…SVIH). Residues 267 to 291 (FHCDSCGTKFGYKHMLQRHLERGTC) form a C2H2-type 8; atypical zinc finger. A C2H2-type 9 zinc finger spans residues 349-374 (YSCSFPECNYRFKRLYDMHRHLNSHH).

Its subcellular location is the nucleus. In terms of biological role, is required for correct transcription of 5S RNA genes by RNA polymerase III. Also binds the transcribed 5S RNA's. Initiates transcription of the 5S ribosomal RNA gene. This Schizosaccharomyces pombe (strain 972 / ATCC 24843) (Fission yeast) protein is Transcription factor IIIA (sfc2).